Consider the following 819-residue polypeptide: Molybdenum cofactor sulfurase (819 aa).

Lys-271 carries the N6-(pyridoxal phosphate)lysine modification. Cys-430 is an active-site residue. The 168-residue stretch at 650–817 folds into the MOSC domain; the sequence is CKLLRYSSST…IGVGEEVNPD (168 aa).

The protein belongs to the class-V pyridoxal-phosphate-dependent aminotransferase family. MOCOS subfamily. Pyridoxal 5'-phosphate is required as a cofactor. In terms of tissue distribution, ubiquitously expressed.

The catalysed reaction is Mo-molybdopterin + L-cysteine + AH2 = thio-Mo-molybdopterin + L-alanine + A + H2O. It functions in the pathway cofactor biosynthesis; molybdopterin biosynthesis. In terms of biological role, sulfurates the molybdenum cofactor. Sulfation of molybdenum is essential for xanthine dehydrogenase (XDH) and aldehyde oxidase (ADO) enzymes in which molybdenum cofactor is liganded by 1 oxygen and 1 sulfur atom in active form. Modulates cold stress- and osmotic stress-responsive gene expression by acting as key regulator of abscisic acid (ABA) biosynthesis. In Arabidopsis thaliana (Mouse-ear cress), this protein is Molybdenum cofactor sulfurase (ABA3).